The following is a 424-amino-acid chain: MAALGDEVLDGYVFPACPPCSYRYPYPAATKGKGAAGGSWQQRGRGCLPASSPCSAGAASLSFPGCGRLTAAEYFDSYQRERLMALLAQVGPGLGPRARRAGSCDVAVQVSPRIDAAVQCSLGRRTLQRRARDPESPAGPGAEGTTGGGSFSQQPSRRGLEQGSPQNGAPRPMRFPRTVAVYSPLALRRLTAFLEGPGPAAGEQRSGASDGERGPPPARLQGPEEGEVWTKKAPRRPQSDDDGEAQAAVRASWEQPADGPELPPREAQEGEAAPRSALRSPGQPPSAGRARDGGDGREAAVAGEGPSPRSPELGKERLRFQFLEQKYGYYHCKDCNIRWESAYVWCVQGTNKVYFKQFCRTCQKSYNPYRVEDITCQSCKQTRCSCPVKLRHVDPKRPHRQDLCGRCKGKRLSCDSTFSFKYII.

2 disordered regions span residues 125-175 and 196-313; these read RTLQ…PMRF and GPGP…SPEL. Residues 141–150 are compositionally biased toward gly residues; it reads GAEGTTGGGS. Basic and acidic residues predominate over residues 289 to 298; it reads RARDGGDGRE. The segment at 326–409 adopts a 3CxxC-type zinc-finger fold; the sequence is KYGYYHCKDC…RQDLCGRCKG (84 aa).

This sequence belongs to the ZAR1 family. In terms of assembly, interacts with YBX2. Ubiquitinated and degradaded by the proteasome during oocyte meiotic maturation, leading to MARDO (mitochondria-associated ribonucleoprotein domain) membraneless compartment dissolution. As to expression, ovary and testis.

The protein resides in the cytoplasm. It localises to the cytoplasmic ribonucleoprotein granule. MRNA-binding protein that mediates formation of MARDO (mitochondria-associated ribonucleoprotein domain), a membraneless compartment that stores maternal mRNAs in oocytes. MARDO assembly around mitochondria is directed by an increase in mitochondrial membrane potential during oocyte growth. Promotes formation of MARDO phase-separated membraneless compartment by undergoing liquid-liquid phase separation upon binding to maternal mRNAs. Binds to the 3'-UTR of maternal mRNAs. Maternal mRNAs stored in the MARDO are translationally repressed. Essential for female fertility and oocyte-to-embryo transition by coordinating maternal mRNA storage, translation and degradation. In Homo sapiens (Human), this protein is Zygote arrest protein 1.